Reading from the N-terminus, the 70-residue chain is GTVVAPMVGLEVKVLVKDGEKVQEGQPVLVLEAMKMEHVVKAPANGYVSGLEIKVGQSVQDGIKLFALKD.

In terms of domain architecture, Biotinyl-binding spans 1–69; sequence GTVVAPMVGL…QDGIKLFALK (69 aa). Lysine 35 carries the N6-biotinyllysine modification.

Its subcellular location is the plastid. The protein resides in the chloroplast. It participates in lipid metabolism; fatty acid biosynthesis. Functionally, this protein is a component of the acetyl coenzyme A carboxylase complex; first, biotin carboxylase catalyzes the carboxylation of the carrier protein and then the transcarboxylase transfers the carboxyl group to form malonyl-CoA. The chain is Biotin carboxyl carrier protein of acetyl-CoA carboxylase from Solanum lycopersicum (Tomato).